The primary structure comprises 830 residues: Kinesin-like protein KIN-14B (830 aa).

Residues 56–97 (ENISDDNTESEAKVQKIQDELVSLNAQLKQITLQRREALNNY) are a coiled coil. Positions 103–425 (NIRVFCRIRP…LGFATRVRSI (323 aa)) constitute a Kinesin motor domain. 182-189 (GQTGSGKT) is an ATP binding site. Positions 434 to 476 (EMKARKETLLIDLGQKVNDLEHECEDIRRKIKNLEESMEHLTG) form a coiled coil.

The protein belongs to the TRAFAC class myosin-kinesin ATPase superfamily. Kinesin family. KIN-14 subfamily.

This is Kinesin-like protein KIN-14B from Oryza sativa subsp. japonica (Rice).